The chain runs to 460 residues: T-box transcription factor TBX1 (460 aa).

Disordered regions lie at residues 30 to 53 (LNTP…ESQF) and 67 to 99 (GSNS…TLVK). Positions 67–84 (GSNSAQAPAQGDSGTSNC) are enriched in polar residues. Positions 116–294 (LWDEFNQLGT…SNPFAKGFRD (179 aa)) form a DNA-binding region, T-box. Disordered regions lie at residues 317-355 (RTRN…DPTH) and 376-400 (PLTA…PDTL). The span at 320 to 330 (NPMSSPPQQNG) shows a compositional bias: polar residues. Residues 331–344 (TEKEDSRREYDRDP) are compositionally biased toward basic and acidic residues. The Nuclear localization signal signature appears at 418–429 (KTRPSPYPSPSI).

As to quaternary structure, binds DNA as a dimer. Expressed in the ear and mesendodermal components of pharyngeal arches.

It localises to the nucleus. Its function is as follows. Probable transcriptional regulator involved in developmental processes. Binds to the palindromic T site 5'-TTCACACCTAGGTGTGAA-3' DNA sequence. Is required for normal development of the pharyngeal arch arteries. Acts cell autonomously in the pharyngeal mesendoderm and influences the development of neural crest-derived cartilages secondarily. This Danio rerio (Zebrafish) protein is T-box transcription factor TBX1 (tbx1).